The sequence spans 374 residues: Ras-related GTP-binding protein B (374 aa).

Methionine 1 carries the post-translational modification N-acetylmethionine. Residues methionine 1–valine 15 show a composition bias toward basic and acidic residues. A disordered region spans residues methionine 1–leucine 30. Serine 49 and glycine 50 together coordinate GTP. GDP-binding residues include glycine 50, serine 51, glycine 52, lysine 53, threonine 54, serine 55, threonine 69, and threonine 75. Residues glycine 52, lysine 53, threonine 54, serine 55, threonine 69, threonine 75, glycine 126, and histidine 188 each contribute to the GTP site. 2 residues coordinate GDP: histidine 188 and aspartate 191. Lysine 203 is covalently cross-linked (Glycyl lysine isopeptide (Lys-Gly) (interchain with G-Cter in ubiquitin)). 2 residues coordinate GDP: leucine 209 and isoleucine 225. Isoleucine 225 contributes to the GTP binding site. Residues lysine 281, lysine 291, and lysine 305 each participate in a glycyl lysine isopeptide (Lys-Gly) (interchain with G-Cter in ubiquitin) cross-link.

The protein belongs to the GTR/RAG GTP-binding protein family. Interacts with RRAGC and RRAGD; heterodimerization stabilizes RRAG proteins. The GTP-bound form of RRAGB (in complex with the GDP-bound form of RRAGC or RRAGD) interacts with RPTOR, thereby promoting recruitment of mTORC1 to the lysosomes. Component of the lysosomal folliculin complex (LFC), composed of FLCN, FNIP1 (or FNIP2), RagA/RRAGA or RagB/RRAGB GDP-bound, RagC/RRAGC or RagD/RRAGD GTP-bound, and Ragulator. Interacts with SH3BP4; the interaction with this negative regulator is most probably direct, preferentially occurs with the inactive GDP-bound form of RRAGB, is negatively regulated by amino acids and prevents interaction with RPTOR. Interacts with the GATOR1 complex; inactivates RRAGB. The Rag heterodimer interacts with SLC38A9; the probable amino acid sensor. Interacts with SESN1, SESN2 and SESN3.

Its subcellular location is the cytoplasm. The protein resides in the lysosome membrane. The enzyme catalyses GTP + H2O = GDP + phosphate + H(+). With respect to regulation, the activation of GTP-binding proteins is generally mediated by a guanine exchange factor (GEF), while inactivation through hydrolysis of bound GTP is catalyzed by a GTPase activating protein (GAP). The Ragulator complex functions as a GEF and promotes the active GTP-bound form. The GATOR1 complex functions as a GAP and stimulates RRAGB GTPase activity to turn it into its inactive GDP-bound form, preventing mTORC1 recruitment and activation. Its function is as follows. Guanine nucleotide-binding protein that plays a crucial role in the cellular response to amino acid availability through regulation of the mTORC1 signaling cascade. Forms heterodimeric Rag complexes with RagC/RRAGC or RagD/RRAGD and cycles between an inactive GDP-bound and an active GTP-bound form: RagB/RRAGB is in its active form when GTP-bound RagB/RRAGB forms a complex with GDP-bound RagC/RRAGC (or RagD/RRAGD) and in an inactive form when GDP-bound RagB/RRAGB heterodimerizes with GTP-bound RagC/RRAGC (or RagD/RRAGD). In its GTP-bound active form, promotes the recruitment of mTORC1 to the lysosomes and its subsequent activation by the GTPase RHEB. Involved in the RCC1/Ran-GTPase pathway. The polypeptide is Ras-related GTP-binding protein B (Mus musculus (Mouse)).